Consider the following 446-residue polypeptide: tRNA-2-methylthio-N(6)-dimethylallyladenosine synthase (446 aa).

Positions 3–124 (KKLYIKTYGC…LPELISKVVR (122 aa)) constitute an MTTase N-terminal domain. [4Fe-4S] cluster is bound by residues Cys-12, Cys-48, Cys-87, Cys-162, Cys-166, and Cys-169. The Radical SAM core domain occupies 148–380 (YPQGASSFIS…QKELAAQQLA (233 aa)). Residues 383-446 (ESCIGSTMKV…LNSLSGEIYR (64 aa)) form the TRAM domain.

Belongs to the methylthiotransferase family. MiaB subfamily. As to quaternary structure, monomer. It depends on [4Fe-4S] cluster as a cofactor.

The protein resides in the cytoplasm. It carries out the reaction N(6)-dimethylallyladenosine(37) in tRNA + (sulfur carrier)-SH + AH2 + 2 S-adenosyl-L-methionine = 2-methylsulfanyl-N(6)-dimethylallyladenosine(37) in tRNA + (sulfur carrier)-H + 5'-deoxyadenosine + L-methionine + A + S-adenosyl-L-homocysteine + 2 H(+). In terms of biological role, catalyzes the methylthiolation of N6-(dimethylallyl)adenosine (i(6)A), leading to the formation of 2-methylthio-N6-(dimethylallyl)adenosine (ms(2)i(6)A) at position 37 in tRNAs that read codons beginning with uridine. In Rickettsia bellii (strain RML369-C), this protein is tRNA-2-methylthio-N(6)-dimethylallyladenosine synthase.